The sequence spans 429 residues: 26S proteasome regulatory subunit 6A homolog (429 aa).

Residues 1–21 (MSSPPPAAAAAMAVDDADDDQ) form a disordered region. 217 to 224 (GPPGTGKT) provides a ligand contact to ATP.

It belongs to the AAA ATPase family.

It localises to the cytoplasm. The protein localises to the nucleus. In terms of biological role, the 26S proteasome is involved in the ATP-dependent degradation of ubiquitinated proteins. The regulatory (or ATPase) complex confers ATP dependency and substrate specificity to the 26S complex. The chain is 26S proteasome regulatory subunit 6A homolog (TBP1) from Oryza sativa subsp. japonica (Rice).